We begin with the raw amino-acid sequence, 406 residues long: GTPase Obg (406 aa).

Residues 1–159 (MRFVDEAVIT…REIRLELKVL (159 aa)) enclose the Obg domain. The tract at residues 120-143 (GGEGGLGNTHFKSSTNRAPRKCTT) is disordered. An OBG-type G domain is found at 160–333 (ADVGLLGMPN…VVYYLMDQIE (174 aa)). GTP-binding positions include 166 to 173 (GMPNAGKS), 191 to 195 (FTTMV), 213 to 216 (DIPG), 283 to 286 (NKLD), and 314 to 316 (SGL). Mg(2+) is bound by residues S173 and T193. The interval 381 to 406 (ESMMDDDDDFDDDEDDGDVESIYVRD) is disordered. Positions 383 to 399 (MMDDDDDFDDDEDDGDV) are enriched in acidic residues.

It belongs to the TRAFAC class OBG-HflX-like GTPase superfamily. OBG GTPase family. As to quaternary structure, monomer. Mg(2+) is required as a cofactor.

Its subcellular location is the cytoplasm. In terms of biological role, an essential GTPase which binds GTP, GDP and possibly (p)ppGpp with moderate affinity, with high nucleotide exchange rates and a fairly low GTP hydrolysis rate. Plays a role in control of the cell cycle, stress response, ribosome biogenesis and in those bacteria that undergo differentiation, in morphogenesis control. This Acinetobacter baumannii (strain ACICU) protein is GTPase Obg.